We begin with the raw amino-acid sequence, 152 residues long: Calcium-binding protein SPEC 1A (152 aa).

EF-hand domains lie at 10–45, 46–81, 84–119, and 120–152; these read EEVTEFKRRFKNKDTDKSKSITAEELGEFFKSTGKS, YTDKQIDKMISDVDTDESGTIDFSEMLMGIAEQMVK, WKEEHYTKAFDDMDKDGNGSLSPQELREALSASKPP, and MKRKKIKAIIQKADANKDGKIDREEFMKLIKSC. Residues Asp23, Asp25, Ser27, Ser29, Glu34, Asp59, Asp61, Ser63, Thr65, Glu70, Asp97, Asp99, Asn101, Ser103, Glu108, Asp133, Asn135, Asp137, Lys139, and Glu144 each coordinate Ca(2+). The tract at residues 95 to 121 is disordered; the sequence is DMDKDGNGSLSPQELREALSASKPPMK.

In terms of tissue distribution, found in cell lineages giving rise to the aboral ectoderm, a squamous epithelium covering the surface of the late stage embryo and larva.

Functionally, calcium-binding protein involved in larval development and metamorphosis. Likely to function as calcium buffers mediating the transport of calcium from the sea water to the blastocoel where calcium is required for skeleton formation. This Strongylocentrotus purpuratus (Purple sea urchin) protein is Calcium-binding protein SPEC 1A (SPEC1).